We begin with the raw amino-acid sequence, 234 residues long: Staphylococcal superantigen-like 5 (234 aa).

Positions 1–30 are cleaved as a signal peptide; it reads MKMTAIAKASLALGILATGTITSLHQTVNA.

It belongs to the staphylococcal/streptococcal toxin family. Interacts with host SELPLG; this interaction prevents SELPLG-mediated neutrophil rolling. Interacts with host MMP9 (via sialic acid-containing O-glycans); this interaction inhibits MMP9 activity. Interacts with host GP1BA and GP6; these interactions play an important role in platelet binding and activation.

Functionally, secreted protein that plays a role in the inhibition of host innate immune system. Modulates the interaction between host SELPLG and P-selectin thereby preventing initial rolling of neutrophils toward the site of infection. Interferes with leukocyte trafficking by inhibiting host metalloproteinase-9/MMP9 activity. Also associates with two different platelet surface receptors GP1A and GP6 leading to platelet activation and aggregation. This chain is Staphylococcal superantigen-like 5, found in Staphylococcus aureus (strain NCTC 8325 / PS 47).